The primary structure comprises 146 residues: Wheatwin-1 (146 aa).

The first 21 residues, 1–21 (MAARPMLVVALLCAAAAAATA), serve as a signal peptide directing secretion. Position 22 is a pyrrolidone carboxylic acid (Gln22). Residues 22-146 (QQATNVRATY…VNYQFVDCRD (125 aa)) enclose the Barwin domain. 3 cysteine pairs are disulfide-bonded: Cys52–Cys84, Cys73–Cys107, and Cys87–Cys144.

As to quaternary structure, monomer.

Inhibited by 5'-ADP. Shows antifungal activity towards B.cinerea and towards the wheat-specific pathogenic fungi F.culmorum and F.graminearum (groups 1 and 2). Has ribonuclease activity. The protein is Wheatwin-1 (PR4A) of Triticum aestivum (Wheat).